Here is a 120-residue protein sequence, read N- to C-terminus: Ribosome-binding factor A (120 aa).

It belongs to the RbfA family. As to quaternary structure, monomer. Binds 30S ribosomal subunits, but not 50S ribosomal subunits or 70S ribosomes.

It localises to the cytoplasm. In terms of biological role, one of several proteins that assist in the late maturation steps of the functional core of the 30S ribosomal subunit. Associates with free 30S ribosomal subunits (but not with 30S subunits that are part of 70S ribosomes or polysomes). Required for efficient processing of 16S rRNA. May interact with the 5'-terminal helix region of 16S rRNA. The polypeptide is Ribosome-binding factor A (Rickettsia felis (strain ATCC VR-1525 / URRWXCal2) (Rickettsia azadi)).